Here is a 394-residue protein sequence, read N- to C-terminus: Na(+)/H(+) antiporter NhaA (394 aa).

11 helical membrane-spanning segments follow: residues 11–31 (LEAA…IFAN), 59–79 (LLMW…GMEV), 95–115 (IFPA…YWFI), 125–145 (GWAI…ALLS), 155–175 (FLLA…ALFF), 177–197 (HEMS…LVAM), 203–220 (TGLI…ASVL), 254–274 (ALAP…NAGV), 296–316 (LIIG…LLGI), 328–348 (IFAI…IAGL), and 365–385 (LGIL…LKIT).

The protein belongs to the NhaA Na(+)/H(+) (TC 2.A.33) antiporter family.

It localises to the cell inner membrane. The catalysed reaction is Na(+)(in) + 2 H(+)(out) = Na(+)(out) + 2 H(+)(in). In terms of biological role, na(+)/H(+) antiporter that extrudes sodium in exchange for external protons. The protein is Na(+)/H(+) antiporter NhaA of Actinobacillus pleuropneumoniae serotype 7 (strain AP76).